The following is a 66-amino-acid chain: Large ribosomal subunit protein uL29 (66 aa).

This sequence belongs to the universal ribosomal protein uL29 family.

The sequence is that of Large ribosomal subunit protein uL29 from Petrotoga mobilis (strain DSM 10674 / SJ95).